The primary structure comprises 107 residues: Chlorobenzene dioxygenase, ferredoxin component (107 aa).

Residues 4–99 enclose the Rieske domain; sequence TYIMRQSDLP…IKVEGGDVHV (96 aa). [2Fe-2S] cluster contacts are provided by Cys43, His45, Cys62, and His65.

This sequence belongs to the bacterial ring-hydroxylating dioxygenase ferredoxin component family. This dioxygenase system consists of four proteins: the two subunits of the oxygenase component (TecA1 and TecA2), a ferredoxin (TecA3) and a ferredoxin reductase (TecA4). It depends on [2Fe-2S] cluster as a cofactor.

Its pathway is aromatic compound metabolism. In terms of biological role, part of the chlorobenzene dioxygenase system that catalyzes the dihydroxylation of a range of aromatic compounds, including chlorinated benzenes and toluenes, and dinuclear aromatics such as biphenyl and dibenzo-p-dioxin. The polypeptide is Chlorobenzene dioxygenase, ferredoxin component (Cupriavidus sp. (strain PS12)).